Consider the following 232-residue polypeptide: Probable thiopurine S-methyltransferase (232 aa).

Residues 14-25 (WENRWQEGRTGF), Leu54, Glu75, and Arg137 contribute to the S-adenosyl-L-methionine site. Residue Phe25 coordinates substrate.

Belongs to the class I-like SAM-binding methyltransferase superfamily. TPMT family.

Its subcellular location is the cytoplasm. It catalyses the reaction S-adenosyl-L-methionine + a thiopurine = S-adenosyl-L-homocysteine + a thiopurine S-methylether.. The chain is Probable thiopurine S-methyltransferase (tpmt) from Danio rerio (Zebrafish).